A 212-amino-acid polypeptide reads, in one-letter code: Ribosomal RNA large subunit methyltransferase E (212 aa).

Residues glycine 57, tryptophan 59, aspartate 77, aspartate 93, and aspartate 122 each contribute to the S-adenosyl-L-methionine site. Lysine 162 (proton acceptor) is an active-site residue.

Belongs to the class I-like SAM-binding methyltransferase superfamily. RNA methyltransferase RlmE family.

It localises to the cytoplasm. It catalyses the reaction uridine(2552) in 23S rRNA + S-adenosyl-L-methionine = 2'-O-methyluridine(2552) in 23S rRNA + S-adenosyl-L-homocysteine + H(+). Specifically methylates the uridine in position 2552 of 23S rRNA at the 2'-O position of the ribose in the fully assembled 50S ribosomal subunit. The protein is Ribosomal RNA large subunit methyltransferase E of Coxiella burnetii (strain RSA 493 / Nine Mile phase I).